The sequence spans 130 residues: Protein ApaG (130 aa).

The 125-residue stretch at 3-127 folds into the ApaG domain; the sequence is RAITRNIQVT…FSLDVPDVRR (125 aa).

This chain is Protein ApaG, found in Xanthobacter autotrophicus (strain ATCC BAA-1158 / Py2).